The primary structure comprises 722 residues: Homeobox-leucine zipper protein HDG11 (722 aa).

Residues 1-19 are compositionally biased toward gly residues; it reads MSFVVGVGGSGSGSGGDGG. A disordered region spans residues 1-42; sequence MSFVVGVGGSGSGSGGDGGGSHHHDGSETDRKKKRYHRHTAQ. A compositionally biased stretch (basic and acidic residues) spans 20–31; that stretch reads GSHHHDGSETDR. Positions 32–91 form a DNA-binding region, homeobox; that stretch reads KKKRYHRHTAQQIQRLESSFKECPHPDEKQRNQLSRELGLAPRQIKFWFQNRRTQLKAQH. Residues 81–161 are a coiled coil; that stretch reads QNRRTQLKAQ…LERMSTIASK (81 aa). The 234-residue stretch at 227 to 460 folds into the START domain; sequence SDMDKPIMTG…LQRMCERFAS (234 aa).

It belongs to the HD-ZIP homeobox family. Class IV subfamily. As to quaternary structure, interacts with BBM. As to expression, expressed in apical meristems and young epidermal tissue including trichomes and stipules. Expressed in lateral root tips, the L1 layer of apical inflorescence meristems and early flower primordia, carpel and petal epidermis, stigma papillae, ovule primordia, nucellus and embryo.

The protein resides in the nucleus. Transcription factor which acts as a positive regulator of drought stress tolerance. Can transactivate CIPK3, NCED3 and ERECTA. Transactivates several cell-wall-loosening protein genes by directly binding to HD motifs in their promoters. These target genes play important roles in coordinating cell-wall extensibility with root development and growth. Transactivates CYP74A/AOS, AOC3, OPR3 and 4CLL5/OPCL1 genes by directly binding to HD motifs in their promoters. These target genes are involved in jasmonate (JA) biosynthesis, and JA signaling affects root architecture by activating auxin signaling, which promotes lateral root formation. Acts as a negative regulator of trichome branching. Required for the establishment of giant cell identity on the abaxial side of sepals. Seems to promote cell differentiation. May regulate cell differentiation and proliferation during root and shoot meristem development. This Arabidopsis thaliana (Mouse-ear cress) protein is Homeobox-leucine zipper protein HDG11.